We begin with the raw amino-acid sequence, 811 residues long: Abnormal pharyngeal pumping eat-20 (811 aa).

A signal peptide spans 1-20; sequence MTTFCRVLLIFGIYVAVSCA. Topologically, residues 21–749 are extracellular; the sequence is QSVEDDVFHF…GKQSSAVASW (729 aa). Asparagine 90, asparagine 171, and asparagine 232 each carry an N-linked (GlcNAc...) asparagine glycan. EGF-like domains lie at 220 to 257, 258 to 293, and 301 to 335; these read PPSP…DRCE, LDVC…LLCE, and AAPI…ANCN. Disulfide bonds link cysteine 224–cysteine 235, cysteine 229–cysteine 245, cysteine 247–cysteine 256, cysteine 261–cysteine 272, cysteine 266–cysteine 281, cysteine 283–cysteine 292, cysteine 305–cysteine 314, cysteine 309–cysteine 323, and cysteine 325–cysteine 334. Asparagine 371 is a glycosylation site (N-linked (GlcNAc...) asparagine). Disordered stretches follow at residues 544-579, 592-659, and 690-739; these read FVSP…QVAT, FPTT…AIST, and PHPQ…HTSS. The span at 551-567 shows a compositional bias: acidic residues; sequence DENEEEEEDETTDETEE. Residues 570–579 show a composition bias toward polar residues; that stretch reads PTPSTMQVAT. The segment covering 597–612 has biased composition (acidic residues); that stretch reads DMEETDEEEDMTEEVT. Residues 626–639 are compositionally biased toward low complexity; that stretch reads PSSTTFTTEAPTTT. Acidic residues-rich tracts occupy residues 640 to 655 and 705 to 717; these read MEEE…ESEE and IESE…ESNE. A helical membrane pass occupies residues 750-770; that stretch reads IIATIALIVLGSLLLATSLFV. Residues 771–811 are Cytoplasmic-facing; sequence LRYIRQSRKLHGKYNPAREEHNLSAAYAMPMSHIAKEERLI.

The protein localises to the membrane. Regulates pharyngeal pumping during feeding. This is Abnormal pharyngeal pumping eat-20 (eat-20) from Caenorhabditis briggsae.